A 938-amino-acid chain; its full sequence is Ubiquitin carboxyl-terminal hydrolase Usp2 (938 aa).

Disordered stretches follow at residues 1-53 (MMLD…KVGA), 91-117 (KVKT…NTSR), 130-254 (FNGN…ISTT), 273-297 (EQNQ…HRYP), 360-410 (LSGQ…NLQQ), and 500-610 (KDAT…EKSE). Positions 22–36 (STTKTSSVVATSASS) are enriched in low complexity. Low complexity-rich tracts occupy residues 137–158 (TTTN…NTSN), 167–177 (STTATATSTST), 198–227 (MNGH…QRQQ), and 275–289 (NQVQ…PSSS). Over residues 392-410 (ASRSNHGSQAGGSSSNLQQ) the composition is skewed to polar residues. 2 stretches are compositionally biased toward low complexity: residues 502–555 (ATTA…TARS) and 574–583 (TSRSSIGTSS). A compositionally biased stretch (basic and acidic residues) spans 592–610 (HNSDDGYKTASSSRDEKSE). A USP domain is found at 613–938 (CGLRNIGNTC…SAYILFYERT (326 aa)). Residue Cys622 is the Nucleophile of the active site. Zn(2+) is bound by residues Cys765, Cys768, Cys814, and Cys817. Residue His895 is the Proton acceptor of the active site.

The protein belongs to the peptidase C19 family. As to quaternary structure, interacts (via N-terminus) with imd (via N-terminus). Interacts with Rpt6.

It carries out the reaction Thiol-dependent hydrolysis of ester, thioester, amide, peptide and isopeptide bonds formed by the C-terminal Gly of ubiquitin (a 76-residue protein attached to proteins as an intracellular targeting signal).. In terms of biological role, hydrolase that deubiquitinates polyubiquitinated target proteins. Required for preventing the activation of the Toll signaling cascades under unchallenged conditions. Essential for bodily calcium homeostasis. Functionally, required for preventing the activation of the immune deficiency (Imd) signaling cascade under unchallenged conditions. Regulates the Imd pathway by specifically removing 'Lys-48'-linked ubiquitin from imd. Also promotes imd degradation probably by binding to imd and enhancing its association with the proteasome. This chain is Ubiquitin carboxyl-terminal hydrolase Usp2, found in Drosophila melanogaster (Fruit fly).